Reading from the N-terminus, the 100-residue chain is U-myrmeciitoxin(01)-Mg7b (100 aa).

The first 17 residues, 1–17 (MKLSCLSLALAIILVLA), serve as a signal peptide directing secretion. A propeptide spanning residues 18–50 (IVYSPHMEVKALADAEPDAIGFADAFGEADAEP) is cleaved from the precursor. Ser-85 carries an O-linked (GalNAc...) serine glycan. Thr-94 and Thr-95 each carry an O-linked (GalNAc...) threonine glycan.

It belongs to the formicidae venom precursor-01 superfamily. Post-translationally, glycosylation is critical to maintaining the aqueous solubility of this protein, but does not directly contribute to its activity. Expressed by the venom gland.

The protein resides in the secreted. The protein localises to the target cell membrane. In terms of biological role, neurotoxin that triggers pain behavior and inflammation in mammals, and is paralytic and lethal to insects. Causes a time-dependent increase in cell leak current. May act by targeting membranes. The protein is U-myrmeciitoxin(01)-Mg7b of Myrmecia gulosa (Red bulldog ant).